A 204-amino-acid chain; its full sequence is Quinol oxidase subunit 3 (204 aa).

A run of 6 helical transmembrane segments spans residues 27–47 (FWIFLGAEIVLFSTLFATFFV), 66–86 (LVMIMTFLLLISSFTCGIAVH), 95–115 (GVVIWTIITLLLGAGFVGCEI), 118–138 (FVHYVHEGAALSTSAFWSGFF), 140–160 (LLGTHGTHVTIGIFWITGILI), and 184–204 (FLDVVWIFIFTGVYLMGLGGL).

It belongs to the cytochrome c oxidase subunit 3 family.

Its subcellular location is the cell membrane. It carries out the reaction 2 a quinol + O2 = 2 a quinone + 2 H2O. Catalyzes quinol oxidation with the concomitant reduction of oxygen to water. Major component for energy conversion during vegetative growth. The protein is Quinol oxidase subunit 3 (qoxC) of Bacillus subtilis (strain 168).